Reading from the N-terminus, the 256-residue chain is Methylesterase 9 (256 aa).

Ser-78 acts as the Acyl-ester intermediate in catalysis. Active-site charge relay system residues include Asp-206 and His-234.

The protein belongs to the AB hydrolase superfamily. Methylesterase family.

The catalysed reaction is methyl (indol-3-yl)acetate + H2O = (indol-3-yl)acetate + methanol + H(+). The enzyme catalyses methyl (-)-jasmonate + H2O = jasmonate + methanol + H(+). It catalyses the reaction methyl salicylate + H2O = salicylate + methanol + H(+). The protein operates within plant hormone biosynthesis. It functions in the pathway lipid metabolism; oxylipin biosynthesis. Its activity is regulated as follows. Esterase activity is down-regulated by salicylic acid (SA). Methylesterase shown to have carboxylesterase activity, methyl indole-3-acetic acid (MeIAA) esterase activity, methyl salicylate (MeSA) esterase activity and methyl jasmonate (MeJA) esterase activity in vitro. Required to convert methyl salicylate (MeSA) to salicylic acid (SA) as part of the signal transduction pathways that activate systemic acquired resistance in systemic tissue. MeSA is believed to be an inactive form that needs to be demethylated to exert a biological effect. This chain is Methylesterase 9, found in Arabidopsis thaliana (Mouse-ear cress).